The primary structure comprises 201 residues: Ribonuclease HII (201 aa).

An RNase H type-2 domain is found at 14-201 (NLIAGVDEVG…KPVKRILGIE (188 aa)). A divalent metal cation contacts are provided by Asp-20, Glu-21, and Asp-112.

Belongs to the RNase HII family. Mn(2+) is required as a cofactor. It depends on Mg(2+) as a cofactor.

It localises to the cytoplasm. It catalyses the reaction Endonucleolytic cleavage to 5'-phosphomonoester.. In terms of biological role, endonuclease that specifically degrades the RNA of RNA-DNA hybrids. This Photobacterium profundum (strain SS9) protein is Ribonuclease HII.